The primary structure comprises 278 residues: Tropomyosin A (278 aa).

A coiled-coil region spans residues 1–270 (IMMAMKLEKE…YRAISGELDT (270 aa)). The tract at residues 92–134 (DFEQSSGRLTETSTKLDDASKAAEESERNRKTLETRSISDDER) is disordered. Residues 95 to 104 (QSSGRLTETS) are compositionally biased toward polar residues. Basic and acidic residues predominate over residues 105–134 (TKLDDASKAAEESERNRKTLETRSISDDER).

Belongs to the tropomyosin family. As to quaternary structure, homodimer.

Functionally, tropomyosin, in association with the troponin complex, plays a central role in the calcium dependent regulation of muscle contraction. The polypeptide is Tropomyosin A (Echinococcus granulosus (Hydatid tapeworm)).